A 348-amino-acid chain; its full sequence is UDP-3-O-acylglucosamine N-acyltransferase (348 aa).

The active-site Proton acceptor is the His257.

This sequence belongs to the transferase hexapeptide repeat family. LpxD subfamily. In terms of assembly, homotrimer.

It carries out the reaction a UDP-3-O-[(3R)-3-hydroxyacyl]-alpha-D-glucosamine + a (3R)-hydroxyacyl-[ACP] = a UDP-2-N,3-O-bis[(3R)-3-hydroxyacyl]-alpha-D-glucosamine + holo-[ACP] + H(+). It participates in bacterial outer membrane biogenesis; LPS lipid A biosynthesis. In terms of biological role, catalyzes the N-acylation of UDP-3-O-acylglucosamine using 3-hydroxyacyl-ACP as the acyl donor. Is involved in the biosynthesis of lipid A, a phosphorylated glycolipid that anchors the lipopolysaccharide to the outer membrane of the cell. This is UDP-3-O-acylglucosamine N-acyltransferase from Bartonella henselae (strain ATCC 49882 / DSM 28221 / CCUG 30454 / Houston 1) (Rochalimaea henselae).